Here is a 240-residue protein sequence, read N- to C-terminus: Adapter protein MecA (240 aa).

The protein belongs to the MecA family. In terms of assembly, homodimer.

Enables the recognition and targeting of unfolded and aggregated proteins to the ClpC protease or to other proteins involved in proteolysis. This Streptococcus mutans serotype c (strain ATCC 700610 / UA159) protein is Adapter protein MecA.